The following is a 420-amino-acid chain: Reticulon-4 receptor-like 2 (420 aa).

The N-terminal stretch at 1–46 is a signal peptide; that stretch reads MLPGLRRLLQAPASACLLLMLLALPLAAPSCPMLCTCYSSPPTVSC. 2 disulfide bridges follow: cysteine 31–cysteine 37 and cysteine 35–cysteine 46. In terms of domain architecture, LRRNT spans 47-60; the sequence is QANNFSSVPLSLPP. An N-linked (GlcNAc...) asparagine glycan is attached at asparagine 50. 8 LRR repeats span residues 61–82, 83–104, 107–129, 132–153, 156–177, 180–201, 204–225, and 228–249; these read STQRLFLQNNLIRTLRPGTFGS, NLLTLWLFSNNLSTIYPGTFRH, ALEELDLGDNRHLRSLEPDTFQG, RLQSLHLYRCQLSSLPGNIFRG, SLQYLYLQENSLLHLQDDLFAD, NLSHLFLHGNRLRLLTEHVFRG, SLDRLLLHGNRLQGVHRAAFRG, and RLTILYLFNNSLASLPGEALAD. Asparagine 93 is a glycosylation site (N-linked (GlcNAc...) asparagine). N-linked (GlcNAc...) asparagine glycosylation occurs at asparagine 236. Residues 261-312 form the LRRCT domain; that stretch reads NPWACDCRARPLWAWFQRARVSSSDVTCATPPERQGRDLRALREADFQACPP. Cystine bridges form between cysteine 265–cysteine 288 and cysteine 267–cysteine 310. A disordered region spans residues 308–399; the sequence is QACPPAAPTR…CQAPPDSRGP (92 aa). Residues 315 to 327 form an important for interaction with MAG region; that stretch reads PTRPGSRARGNSS. Basic and acidic residues predominate over residues 351–360; that stretch reads LPAEDSRGRQ. Cysteine 390 carries the GPI-anchor amidated cysteine lipid modification. The propeptide at 391–420 is removed in mature form; that stretch reads QAPPDSRGPALSAGLPSPLLCLLLLVPHHL.

This sequence belongs to the Nogo receptor family. In terms of assembly, interaction with MAG is controversial, and may be indirect. Does not interact with MAG, OMG and RTN4. Interacts with MAG. Post-translationally, undergoes zinc metalloproteinase-mediated ectodomain shedding in neuroblastoma cells; is released both as a full-length ectodomain and an N-terminal fragment containing the leucine-rich repeat (LRR) region of the protein. In terms of processing, N-glycosylated. In terms of tissue distribution, highly expressed in brain and liver. Expressed at lower levels in kidney, mammary gland, placenta, skeletal muscle, spleen and thyroid.

Its subcellular location is the cell membrane. It is found in the membrane raft. It localises to the cell projection. The protein localises to the dendrite. The protein resides in the perikaryon. Its subcellular location is the axon. Functionally, cell surface receptor that plays a functionally redundant role in the inhibition of neurite outgrowth mediated by MAG. Plays a functionally redundant role in postnatal brain development. Contributes to normal axon migration across the brain midline and normal formation of the corpus callosum. Does not seem to play a significant role in regulating axon regeneration in the adult central nervous system. Protects motoneurons against apoptosis; protection against apoptosis is probably mediated by MAG. Like other family members, plays a role in restricting the number dendritic spines and the number of synapses that are formed during brain development. Signaling mediates activation of Rho and downstream reorganization of the actin cytoskeleton. The chain is Reticulon-4 receptor-like 2 from Homo sapiens (Human).